The primary structure comprises 160 residues: MVAQIRIGQGMDVHAFEEGNFVTLAGVQIPHTHGLKAHSDGDVVLHALCDALLGALALGDIGQHFPDTDPEFKGADSRVLLKHVYQLILDRGYHLNNADITVACERPKLAKYNLEMRQSIADVLNVDLNQISIKATTTEKLGFTGRQEGILATATVLISH.

The a divalent metal cation site is built by D12 and H14. Residues D12 to H14 and H38 to S39 contribute to the 4-CDP-2-C-methyl-D-erythritol 2-phosphate site. H46 provides a ligand contact to a divalent metal cation. 4-CDP-2-C-methyl-D-erythritol 2-phosphate is bound by residues D60–G62, F65–D69, T136–E139, F143, and R146.

Belongs to the IspF family. In terms of assembly, homotrimer. Requires a divalent metal cation as cofactor.

It catalyses the reaction 4-CDP-2-C-methyl-D-erythritol 2-phosphate = 2-C-methyl-D-erythritol 2,4-cyclic diphosphate + CMP. It functions in the pathway isoprenoid biosynthesis; isopentenyl diphosphate biosynthesis via DXP pathway; isopentenyl diphosphate from 1-deoxy-D-xylulose 5-phosphate: step 4/6. In terms of biological role, involved in the biosynthesis of isopentenyl diphosphate (IPP) and dimethylallyl diphosphate (DMAPP), two major building blocks of isoprenoid compounds. Catalyzes the conversion of 4-diphosphocytidyl-2-C-methyl-D-erythritol 2-phosphate (CDP-ME2P) to 2-C-methyl-D-erythritol 2,4-cyclodiphosphate (ME-CPP) with a corresponding release of cytidine 5-monophosphate (CMP). The polypeptide is 2-C-methyl-D-erythritol 2,4-cyclodiphosphate synthase (Acinetobacter baumannii (strain AB307-0294)).